The following is a 265-amino-acid chain: Eukaryotic translation initiation factor 3 subunit J (265 aa).

The segment covering 24-34 has biased composition (acidic residues); it reads AGDEPILDSWD. The segment at 24–74 is disordered; it reads AGDEPILDSWDEEPKAKKEAAKPKPKPKAGGKKNAKGEEKKEQVLAIDELD. Residues 35–45 show a composition bias toward basic and acidic residues; the sequence is EEPKAKKEAAK. The segment covering 46 to 57 has biased composition (basic residues); it reads PKPKPKAGGKKN. Coiled coils occupy residues 78–106 and 190–220; these read RKEL…MAEE and IENI…ARVK.

This sequence belongs to the eIF-3 subunit J family. As to quaternary structure, component of the eukaryotic translation initiation factor 3 (eIF-3) complex.

It is found in the cytoplasm. In terms of biological role, component of the eukaryotic translation initiation factor 3 (eIF-3) complex, which is involved in protein synthesis of a specialized repertoire of mRNAs and, together with other initiation factors, stimulates binding of mRNA and methionyl-tRNAi to the 40S ribosome. The eIF-3 complex specifically targets and initiates translation of a subset of mRNAs involved in cell proliferation. The protein is Eukaryotic translation initiation factor 3 subunit J of Candida glabrata (strain ATCC 2001 / BCRC 20586 / JCM 3761 / NBRC 0622 / NRRL Y-65 / CBS 138) (Yeast).